The chain runs to 520 residues: Aldehyde dehydrogenase 5, mitochondrial (520 aa).

The N-terminal 23 residues, 1-23 (MLSRTRAAAPNSRIFTRSLLRLY), are a transit peptide targeting the mitochondrion. An NAD(+)-binding site is contributed by 266 to 271 (GSTATG). E288 serves as the catalytic Proton acceptor. C322 (nucleophile) is an active-site residue.

This sequence belongs to the aldehyde dehydrogenase family.

It localises to the mitochondrion matrix. It carries out the reaction an aldehyde + NADP(+) + H2O = a carboxylate + NADPH + 2 H(+). It catalyses the reaction an aldehyde + NAD(+) + H2O = a carboxylate + NADH + 2 H(+). Its pathway is alcohol metabolism; ethanol degradation; acetate from ethanol: step 2/2. Induced by potassium ions. Functionally, minor mitochondrial aldehyde dehydrogenase isoform. Plays a role in regulation or biosynthesis of electron transport chain components. Involved in the biosynthesis of acetate during anaerobic growth on glucose. This chain is Aldehyde dehydrogenase 5, mitochondrial (ALD5), found in Saccharomyces cerevisiae (strain YJM789) (Baker's yeast).